We begin with the raw amino-acid sequence, 583 residues long: Sensor protein SrrB (583 aa).

Residues 1-11 (MMSRLNSVVIK) lie on the Cytoplasmic side of the membrane. The chain crosses the membrane as a helical span at residues 12–32 (LWLTIILIVTTVLILLSIALI). The Extracellular portion of the chain corresponds to 33–174 (TFMQYYFTQE…SIEDTNNAIT (142 aa)). A helical transmembrane segment spans residues 175 to 195 (IITIITAVIFLTITTVFAFFL). The Cytoplasmic portion of the chain corresponds to 196–583 (SSRITKPLRR…TFIIKLPKPE (388 aa)). The HAMP domain occupies 197–249 (SRITKPLRRLRDQATRVSEGDYSYKPSVTTKDEIGQLSQAFNQMSTEIEEHVD). Residues 366–583 (NVSHELRTPI…TFIIKLPKPE (218 aa)) enclose the Histidine kinase domain. H369 is subject to Phosphohistidine; by autocatalysis.

It localises to the cell membrane. It carries out the reaction ATP + protein L-histidine = ADP + protein N-phospho-L-histidine.. Member of the two-component regulatory system SrrA/SrrB, which is involved in the global regulation of staphylococcal virulence factors in response to environmental oxygen levels as well as biofilm formation. Also plays an essential role in host-derived nitric oxide resistance by regulating hmp/flavohemoglobin, an enzyme that detoxifies nitric oxide by converting it to nitrate. Functions as a sensor protein kinase which is autophosphorylated at a histidine residue and transfers its phosphate group to SrrA. In turn, SrrA binds to the upstream promoter regions of the target genes to positively and negatively regulate their expression. The polypeptide is Sensor protein SrrB (srrB) (Staphylococcus aureus (strain MW2)).